Here is an 89-residue protein sequence, read N- to C-terminus: Small ribosomal subunit protein uS17 (89 aa).

This sequence belongs to the universal ribosomal protein uS17 family. Part of the 30S ribosomal subunit.

In terms of biological role, one of the primary rRNA binding proteins, it binds specifically to the 5'-end of 16S ribosomal RNA. This is Small ribosomal subunit protein uS17 from Coxiella burnetii (strain RSA 331 / Henzerling II).